The chain runs to 274 residues: Large ribosomal subunit protein uL2cz/uL2cy (274 aa).

Residues 224–252 are disordered; the sequence is NPVDHPHGGGEGRAPIGRKKPVTPWGYPA.

This sequence belongs to the universal ribosomal protein uL2 family. Part of the 50S ribosomal subunit.

The protein resides in the plastid. It is found in the chloroplast. The chain is Large ribosomal subunit protein uL2cz/uL2cy (rpl2-A) from Capsella bursa-pastoris (Shepherd's purse).